The primary structure comprises 364 residues: MAQTLLNDTFLRALLREPTDYTPIWLMRQAGRYLPEYNATRARAGSFLGLAKQPDYATEVTLQPLERFPLDAAILFSDILTIPDAMGLGLDFAAGEGPKFAHPVRTEADVAKLAVPDIGATLGYVTDAVREIRRALTDGEGRQRVPLIGFSGSPWTLACYMVEGGGSDDFRTVKSMAYARPDLMHRILDVNAQAVAAYLNAQIEAGAQAVMIFDTWGGALADGGYQRFSLDYVRRVLAQLKREHDGARVPAIAFTKGGGLWLEELAATGVDAVGLDWTVNLGRARERVAGRVALQGNLDPTILFAPPEAIRAEARAVLDSYGNHPGHVFNLGHGISQFTPPEHVAELVDEVHRHSRAIRSGAGS.

Residues 28-32 (RQAGR), aspartate 78, tyrosine 160, threonine 215, and histidine 333 contribute to the substrate site.

This sequence belongs to the uroporphyrinogen decarboxylase family. In terms of assembly, homodimer.

It localises to the cytoplasm. The catalysed reaction is uroporphyrinogen III + 4 H(+) = coproporphyrinogen III + 4 CO2. Its pathway is porphyrin-containing compound metabolism; protoporphyrin-IX biosynthesis; coproporphyrinogen-III from 5-aminolevulinate: step 4/4. In terms of biological role, catalyzes the decarboxylation of four acetate groups of uroporphyrinogen-III to yield coproporphyrinogen-III. The sequence is that of Uroporphyrinogen decarboxylase from Burkholderia mallei (strain NCTC 10247).